The sequence spans 293 residues: Probable porphobilinogen deaminase (293 aa).

Cys233 carries the S-(dipyrrolylmethanemethyl)cysteine modification.

Belongs to the HMBS family. It depends on dipyrromethane as a cofactor.

The enzyme catalyses 4 porphobilinogen + H2O = hydroxymethylbilane + 4 NH4(+). Its pathway is porphyrin-containing compound metabolism; protoporphyrin-IX biosynthesis; coproporphyrinogen-III from 5-aminolevulinate: step 2/4. Tetrapolymerization of the monopyrrole PBG into the hydroxymethylbilane pre-uroporphyrinogen in several discrete steps. This Saccharolobus islandicus (strain Y.N.15.51 / Yellowstone #2) (Sulfolobus islandicus) protein is Probable porphobilinogen deaminase.